Consider the following 574-residue polypeptide: MANTPHGGVLKDLLARDAPRHDQLAAEAEILPALTLTERQLCDLELIMNGGFSPLEGFMNQKDFDGVCENCRLADGNVFSMPITLDASQKTISELKLQAGSRLTLRDFRDDRNLAILTIDDIYRADKQKEAKLVFGGDPEHPAIKYLNNTVQEFYIGGKIEAVNKLNHYDYVALRYTPAELRVHFDKLGWSRVVAFQTRNPMHRAHRELTVRAARARQANVLIHPVVGLTKPGDIDHFTRVRAYQALLPRYPNGMAVLGLLGLAMRMGGPREAIWHAIIRKNHGATHFIVGRDHAGPGKNSKGEEFYGPYDAQHAVEKYKDELGIEVVEFQQVTYLPDTDEYRPKDEVPAGVKTLDISGTELRKRLRTGAHIPEWFSYPEVVKILRESNPPRASQGFTIFLTGYMNSGKDAIARALQVTLNQQGGRSVTLLLGDTVRHELSSELGFSREDRHTNIQRIAFVAGELTRAGAAVIAAPIAPYEESRKAAREAVAGSGGNFFLVHVATPLEHCEKTDKRGIYAKARRGEIKGFTGVDDPYEAPANADLTVDVSKQSVRSIVHEIILMLESEGYFERL.

Residues 1-169 are N-terminal; sequence MANTPHGGVL…IEAVNKLNHY (169 aa). The interval 170 to 394 is catalytic; the sequence is DYVALRYTPA…LRESNPPRAS (225 aa). A sulfate-binding site is contributed by Q197. Residues 197–200 and 291–294 each bind ATP; these read QTRN and GRDH. Active-site residues include T198, R199, and N200. Residue R199 participates in sulfate binding. A295 serves as a coordination point for sulfate. V333 serves as a coordination point for ATP. Residues 395–574 form an allosteric regulation domain; adenylyl-sulfate kinase-like region; the sequence is QGFTIFLTGY…LESEGYFERL (180 aa). Residues 434–437, R451, 477–478, and R516 contribute to the 3'-phosphoadenylyl sulfate site; these read DTVR and IA.

In the N-terminal section; belongs to the sulfate adenylyltransferase family. The protein in the C-terminal section; belongs to the APS kinase family. In terms of assembly, homohexamer. Dimer of trimers.

It is found in the cytoplasm. It catalyses the reaction sulfate + ATP + H(+) = adenosine 5'-phosphosulfate + diphosphate. It participates in sulfur metabolism; hydrogen sulfide biosynthesis; sulfite from sulfate: step 1/3. Allosterically inhibited by 3'-phosphoadenosine 5'-phosphosulfate (PAPS). Its function is as follows. Catalyzes the first intracellular reaction of sulfate assimilation, forming adenosine-5'-phosphosulfate (APS) from inorganic sulfate and ATP. Plays an important role in sulfate activation as a component of the biosynthesis pathway of sulfur-containing amino acids. The protein is Sulfate adenylyltransferase of Aspergillus niger.